Reading from the N-terminus, the 1074-residue chain is Probable phospholipid-transporting ATPase tat-5 (1074 aa).

Residues 1–26 (MGKRKKNDESSSSSSQKPCVSSSSDD) form a disordered region. The span at 10–26 (SSSSSSQKPCVSSSSDD) shows a compositional bias: low complexity. The next 4 helical transmembrane spans lie at 118 to 138 (FVPI…FLLM), 143 to 163 (FIPA…GFVL), 354 to 374 (LTKL…AMKG), and 378 to 398 (LWYR…PISL). The active-site 4-aspartylphosphate intermediate is Asp442. 14 residues coordinate ATP: Asp442, Lys443, Thr444, Glu524, Phe570, Lys575, Lys594, Arg623, Thr624, Thr704, Gly705, Asp706, Arg786, and Lys792. Asp442 is a binding site for Mg(2+). Mg(2+) is bound at residue Thr444. A Mg(2+)-binding site is contributed by Asp813. Positions 816 and 817 each coordinate ATP. Residue Asp817 coordinates Mg(2+). 5 helical membrane-spanning segments follow: residues 886–906 (AIFS…VLMV), 954–974 (IWVL…LLVF), 978–998 (FIHV…IMVA), 1006–1026 (WAML…LILF), and 1038–1058 (WVFI…LYIV).

Belongs to the cation transport ATPase (P-type) (TC 3.A.3) family. Type IV subfamily. Mg(2+) serves as cofactor.

Its subcellular location is the cell membrane. It carries out the reaction ATP + H2O + phospholipidSide 1 = ADP + phosphate + phospholipidSide 2.. Plays a role in regulating membrane trafficking of cargo proteins during embryogenesis. Regulates snx-3 retromer-mediated endosomal sorting of mig-14, a transporter of Wnt egl-20 morphogen. Together with mon-2 and pad-1, may participate in the formation of endosomal carriers that direct mig-14 trafficking back to Golgi, away from lysosomal degradation. Required for Wnt egl-20 gradient formation along the anteroposterior body axis and migration of QL neuroblast descendants toward the posterior part. Maintains phosphatidylethanolamine (PE) asymmetry at the cell membrane and prevents the budding of ectosome vesicles that affect intercellular communication and morphogenesis. The sequence is that of Probable phospholipid-transporting ATPase tat-5 (tat-5) from Caenorhabditis elegans.